The sequence spans 263 residues: L-aspartate dehydrogenase (263 aa).

A120 and N186 together coordinate NAD(+). Residue H216 is part of the active site.

It belongs to the L-aspartate dehydrogenase family.

It catalyses the reaction L-aspartate + NADP(+) + H2O = oxaloacetate + NH4(+) + NADPH + H(+). The enzyme catalyses L-aspartate + NAD(+) + H2O = oxaloacetate + NH4(+) + NADH + H(+). The protein operates within cofactor biosynthesis; NAD(+) biosynthesis; iminoaspartate from L-aspartate (dehydrogenase route): step 1/1. In terms of biological role, specifically catalyzes the NAD or NADP-dependent dehydrogenation of L-aspartate to iminoaspartate. The chain is L-aspartate dehydrogenase from Psychrobacter cryohalolentis (strain ATCC BAA-1226 / DSM 17306 / VKM B-2378 / K5).